The sequence spans 532 residues: Optineurin (532 aa).

Coiled-coil stretches lie at residues 27-143 and 195-466; these read SMKN…LKLG and EEVA…EEMM. The segment at 502 to 532 adopts a CCHC NOA-type zinc-finger fold; that stretch reads QPSITVYTCPKCNLTVPDMDTLQIHVMDCIT. Zn(2+) is bound by residues Cys510, Cys513, His526, and Cys530.

The protein resides in the cytoplasm. It localises to the perinuclear region. Its subcellular location is the golgi apparatus. It is found in the trans-Golgi network. The protein localises to the cytoplasmic vesicle. The protein resides in the recycling endosome. It localises to the autophagosome. Its function is as follows. Probably part of the TNF-alpha signaling pathway that can shift the equilibrium toward induction of cell death. May act by regulating membrane trafficking and cellular morphogenesis. This is Optineurin (optn) from Xenopus laevis (African clawed frog).